Reading from the N-terminus, the 161-residue chain is SsrA-binding protein (161 aa).

It belongs to the SmpB family.

Its subcellular location is the cytoplasm. Its function is as follows. Required for rescue of stalled ribosomes mediated by trans-translation. Binds to transfer-messenger RNA (tmRNA), required for stable association of tmRNA with ribosomes. tmRNA and SmpB together mimic tRNA shape, replacing the anticodon stem-loop with SmpB. tmRNA is encoded by the ssrA gene; the 2 termini fold to resemble tRNA(Ala) and it encodes a 'tag peptide', a short internal open reading frame. During trans-translation Ala-aminoacylated tmRNA acts like a tRNA, entering the A-site of stalled ribosomes, displacing the stalled mRNA. The ribosome then switches to translate the ORF on the tmRNA; the nascent peptide is terminated with the 'tag peptide' encoded by the tmRNA and targeted for degradation. The ribosome is freed to recommence translation, which seems to be the essential function of trans-translation. The protein is SsrA-binding protein of Vesicomyosocius okutanii subsp. Calyptogena okutanii (strain HA).